A 388-amino-acid chain; its full sequence is Cdc42 effector protein 1 (388 aa).

The segment at methionine 1–histidine 28 is disordered. A phosphoserine mark is found at serine 19 and serine 27. The residue at position 34 (threonine 34) is a Phosphothreonine. The CRIB domain occupies isoleucine 38–glycine 52. Position 39 is a phosphoserine (serine 39). Arginine 53 is subject to Omega-N-methylarginine. Serine 65, serine 77, serine 101, serine 113, serine 121, and serine 139 each carry phosphoserine. The segment at arginine 165 to arginine 206 is disordered. The segment covering proline 167–glutamine 191 has biased composition (basic and acidic residues). Phosphoserine is present on residues serine 193, serine 207, serine 209, and serine 212. A run of 2 repeats spans residues proline 237–alanine 243 and proline 250–alanine 256. Positions proline 237 to aspartate 257 are disordered. Positions proline 237 to alanine 270 are 2 X 7 AA tandem repeats of [PT]-[AT]-A-[ENT]-[PT]-[PTS]-[AG]. A compositionally biased stretch (pro residues) spans alanine 239–lysine 253. Serine 298, serine 318, serine 347, and serine 350 each carry phosphoserine.

Belongs to the BORG/CEP family. As to quaternary structure, interacts with RHOQ and CDC42, in a GTP-dependent manner.

The protein resides in the endomembrane system. The protein localises to the cytoplasm. It is found in the cytoskeleton. Its function is as follows. Probably involved in the organization of the actin cytoskeleton. Induced membrane extensions in fibroblasts. The polypeptide is Cdc42 effector protein 1 (Rattus norvegicus (Rat)).